We begin with the raw amino-acid sequence, 289 residues long: Glycine-rich RNA-binding protein 5, mitochondrial (289 aa).

The N-terminal 31 residues, 1–31 (MAFLSKVGRLFSQTSSHVTASSSMLQSIRCM), are a transit peptide targeting the mitochondrion. Residues 34 to 111 (SKIFVGGISY…RRIRVNYATE (78 aa)) form the RRM domain. A disordered region spans residues 219 to 289 (QGSSTNAGFD…TDDGDVAKRA (71 aa)). A compositionally biased stretch (polar residues) spans 257-272 (GSDNQFGDAENGNTEN).

This sequence belongs to the GR-RBP family. In terms of assembly, homodimer. Interacts with MORF8/RIP1 AND RBG3/ORRM3. Binds to RBG2/ORRM5.

The protein localises to the mitochondrion. In terms of biological role, possibly has a role in RNA transcription or processing during stress. Binds RNAs and DNAs sequence with a preference to single-stranded nucleic acids. Displays strong affinity to poly(U) sequence. Involved in C-to-U editing of mitochondrial RNA. Functions as a major mitochondrial editing factor. Controls 44 percent of the mitochondrial editing sites. This chain is Glycine-rich RNA-binding protein 5, mitochondrial, found in Arabidopsis thaliana (Mouse-ear cress).